We begin with the raw amino-acid sequence, 435 residues long: Endoglucanase EG-1 (435 aa).

The signal sequence occupies residues 1-20 (MARGTALLGLTSLLLGLVNG). Glutamine 21 is modified (pyrrolidone carboxylic acid). Disulfide bonds link cysteine 38/cysteine 44, cysteine 71/cysteine 93, and cysteine 83/cysteine 89. N-linked (GlcNAc...) asparagine glycosylation is present at asparagine 109. 6 cysteine pairs are disulfide-bonded: cysteine 160–cysteine 385, cysteine 192–cysteine 215, cysteine 196–cysteine 214, cysteine 235–cysteine 254, cysteine 243–cysteine 248, and cysteine 259–cysteine 335. The active-site Nucleophile is glutamate 217. The active-site Proton donor is glutamate 222. An N-linked (GlcNAc...) asparagine glycan is attached at asparagine 267.

It belongs to the glycosyl hydrolase 7 (cellulase C) family.

Its subcellular location is the secreted. The enzyme catalyses Endohydrolysis of (1-&gt;4)-beta-D-glucosidic linkages in cellulose, lichenin and cereal beta-D-glucans.. Its function is as follows. The biological conversion of cellulose to glucose generally requires three types of hydrolytic enzymes: (1) Endoglucanases which cut internal beta-1,4-glucosidic bonds; (2) Exocellobiohydrolases that cut the disaccharide cellobiose from the non-reducing end of the cellulose polymer chain; (3) Beta-1,4-glucosidases which hydrolyze the cellobiose and other short cello-oligosaccharides to glucose. This chain is Endoglucanase EG-1 (EG-1), found in Humicola insolens (Soft-rot fungus).